Reading from the N-terminus, the 545-residue chain is Probable sucrose-6-phosphate hydrolase (545 aa).

Residues 107-110 (LLND), glutamine 126, 169-170 (FS), 230-231 (RD), and glutamate 285 each bind substrate. The active site involves aspartate 110.

Belongs to the glycosyl hydrolase 32 family.

Its subcellular location is the cytoplasm. The enzyme catalyses Hydrolysis of terminal non-reducing beta-D-fructofuranoside residues in beta-D-fructofuranosides.. Its pathway is glycan biosynthesis; sucrose metabolism. In terms of biological role, enables the bacterium to metabolize sucrose as a sole carbon source. This is Probable sucrose-6-phosphate hydrolase from Psychromonas ingrahamii (strain DSM 17664 / CCUG 51855 / 37).